Reading from the N-terminus, the 420-residue chain is Probable glucuronosyltransferase Os04g0398600 (420 aa).

Residues 1–4 (MGSR) are Cytoplasmic-facing. A helical; Signal-anchor for type II membrane protein transmembrane segment spans residues 5–25 (TVGWWLLAAAVVLAAAAADSG). Residues 26–420 (EAERAAEQHS…AGPVGDLKAW (395 aa)) lie on the Lumenal side of the membrane. N-linked (GlcNAc...) asparagine glycosylation is found at asparagine 147 and asparagine 408.

It belongs to the glycosyltransferase 47 family.

It localises to the golgi apparatus membrane. Its function is as follows. Involved in the synthesis of glucuronoxylan hemicellulose in secondary cell walls. The protein is Probable glucuronosyltransferase Os04g0398600 of Oryza sativa subsp. japonica (Rice).